The chain runs to 125 residues: Basic leucine zipper transcriptional factor ATF-like (125 aa).

Over residues 1 to 14 (MPHSSDSSDSSFSR) the composition is skewed to low complexity. The tract at residues 1 to 58 (MPHSSDSSDSSFSRSPPPGKQDSSDDVRKVQRREKNRIAAQKSRQRQTQKADTLHLES) is disordered. Residues 26-89 (DVRKVQRREK…KYFTSVLSSH (64 aa)) form the bZIP domain. The interval 28 to 50 (RKVQRREKNRIAAQKSRQRQTQK) is basic motif. Position 43 is a phosphoserine (S43). T48 carries the post-translational modification Phosphothreonine. Positions 54–75 (LHLESEDLEKQNAALRKEIKQL) are leucine-zipper.

The protein belongs to the bZIP family. In terms of assembly, heterodimer; mainly heterodimerizes with JUNB. The BATF-JUNB heterodimer interacts with IRF4 and IRF8. Interacts (via bZIP domain) with IRF4 and IRF8; the interaction is direct. Also forms heterodimers with JUN and JUND. Interacts with IFI35. Post-translationally, phosphorylated on serine and threonine residues and at least one tyrosine residue. Phosphorylation at Ser-43 inhibit DNA binding activity and transforms it as a negative regulator of AP-1 mediated transcription.

The protein localises to the nucleus. It localises to the cytoplasm. In terms of biological role, AP-1 family transcription factor that controls the differentiation of lineage-specific cells in the immune system: specifically mediates the differentiation of T-helper 17 cells (Th17), follicular T-helper cells (TfH), CD8(+) dendritic cells and class-switch recombination (CSR) in B-cells. Acts via the formation of a heterodimer with JUNB that recognizes and binds DNA sequence 5'-TGA[CG]TCA-3'. The BATF-JUNB heterodimer also forms a complex with IRF4 (or IRF8) in immune cells, leading to recognition of AICE sequence (5'-TGAnTCA/GAAA-3'), an immune-specific regulatory element, followed by cooperative binding of BATF and IRF4 (or IRF8) and activation of genes. Controls differentiation of T-helper cells producing interleukin-17 (Th17 cells) by binding to Th17-associated gene promoters: regulates expression of the transcription factor RORC itself and RORC target genes such as IL17 (IL17A or IL17B). Also involved in differentiation of follicular T-helper cells (TfH) by directing expression of BCL6 and MAF. In B-cells, involved in class-switch recombination (CSR) by controlling the expression of both AICDA and of germline transcripts of the intervening heavy-chain region and constant heavy-chain region (I(H)-C(H)). Following infection, can participate in CD8(+) dendritic cell differentiation via interaction with IRF4 and IRF8 to mediate cooperative gene activation. Regulates effector CD8(+) T-cell differentiation by regulating expression of SIRT1. Following DNA damage, part of a differentiation checkpoint that limits self-renewal of hematopoietic stem cells (HSCs): up-regulated by STAT3, leading to differentiation of HSCs, thereby restricting self-renewal of HSCs. This chain is Basic leucine zipper transcriptional factor ATF-like (BATF), found in Bos taurus (Bovine).